The chain runs to 118 residues: V-type proton ATPase subunit G 1 (118 aa).

Ala2 carries the N-acetylalanine modification. The segment at 25–90 is disordered; that stretch reads ARKRKARRLK…VQGMQSSQQR (66 aa). Basic and acidic residues predominate over residues 35–56; the sequence is QAKEEAQMEVEQYRREREHEFQ. Composition is skewed to polar residues over residues 57 to 69 and 78 to 89; these read SKQQAAMGSQGNL and RHQVQGMQSSQQ.

Belongs to the V-ATPase G subunit family. V-ATPase is a heteromultimeric enzyme made up of two complexes: the ATP-hydrolytic V1 complex and the proton translocation V0 complex. The V1 complex consists of three catalytic AB heterodimers that form a heterohexamer, three peripheral stalks each consisting of EG heterodimers, one central rotor including subunits D and F, and the regulatory subunits C and H. The proton translocation complex V0 consists of the proton transport subunit a, a ring of proteolipid subunits c9c'', rotary subunit d, subunits e and f, and the accessory subunits ATP6AP1/Ac45 and ATP6AP2/PRR.

It localises to the apical cell membrane. In terms of biological role, subunit of the V1 complex of vacuolar(H+)-ATPase (V-ATPase), a multisubunit enzyme composed of a peripheral complex (V1) that hydrolyzes ATP and a membrane integral complex (V0) that translocates protons. V-ATPase is responsible for acidifying and maintaining the pH of intracellular compartments and in some cell types, is targeted to the plasma membrane, where it is responsible for acidifying the extracellular environment. In aerobic conditions, involved in intracellular iron homeostasis, thus triggering the activity of Fe(2+) prolyl hydroxylase (PHD) enzymes, and leading to HIF1A hydroxylation and subsequent proteasomal degradation. This chain is V-type proton ATPase subunit G 1 (ATP6V1G1), found in Pan troglodytes (Chimpanzee).